Reading from the N-terminus, the 473-residue chain is Probable cytosolic iron-sulfur protein assembly protein 1 (473 aa).

A disordered region spans residues 1-25 (MPSSTPGGSLKHLSDLTPPSQDRTW). WD repeat units follow at residues 11-58 (KHLS…LLST) and 62-104 (GHKR…GRAE). The tract at residues 112-133 (GGLAEADRQEGDDTDGDEEDED) is disordered. The span at 123–133 (DDTDGDEEDED) shows a compositional bias: acidic residues. WD repeat units follow at residues 144–183 (GHDS…DNNF), 191–230 (EHSG…WGQV), 235–313 (GHEG…KPPP), and 341–380 (MHDL…KPPV). The segment at 377–405 (KPPVHTTSEQDKPDSARETQKANGERTAP) is disordered. Positions 384–400 (SEQDKPDSARETQKANG) are enriched in basic and acidic residues. A WD 7 repeat occupies 438-473 (SQQQNFDNSEMDHANEEEVLLSTGDDGVVRVWTLER).

It belongs to the WD repeat CIA1 family.

In terms of biological role, essential component of the cytosolic iron-sulfur (Fe/S) protein assembly machinery. Required for the maturation of extramitochondrial Fe/S proteins. The polypeptide is Probable cytosolic iron-sulfur protein assembly protein 1 (Coccidioides immitis (strain RS) (Valley fever fungus)).